The chain runs to 409 residues: NADH-quinone oxidoreductase subunit D (409 aa).

This sequence belongs to the complex I 49 kDa subunit family. In terms of assembly, NDH-1 is composed of 14 different subunits. Subunits NuoB, C, D, E, F, and G constitute the peripheral sector of the complex.

It localises to the cell inner membrane. The enzyme catalyses a quinone + NADH + 5 H(+)(in) = a quinol + NAD(+) + 4 H(+)(out). Its function is as follows. NDH-1 shuttles electrons from NADH, via FMN and iron-sulfur (Fe-S) centers, to quinones in the respiratory chain. The immediate electron acceptor for the enzyme in this species is believed to be ubiquinone. Couples the redox reaction to proton translocation (for every two electrons transferred, four hydrogen ions are translocated across the cytoplasmic membrane), and thus conserves the redox energy in a proton gradient. The sequence is that of NADH-quinone oxidoreductase subunit D from Sulfurovum sp. (strain NBC37-1).